The sequence spans 466 residues: Tetratricopeptide repeat protein 38 (466 aa).

3 TPR repeats span residues 175 to 212 (MPLY…TPED), 251 to 284 (CHNY…RCVK), and 368 to 400 (LQIA…LKPI).

It belongs to the TTC38 family.

This chain is Tetratricopeptide repeat protein 38 (ttc38), found in Danio rerio (Zebrafish).